The chain runs to 728 residues: Ferric reduction oxidase 8, mitochondrial (728 aa).

Residues 1–24 (MAKVLTLLVLRLLMNLLLIGWISL) constitute a mitochondrion transit peptide. Helical transmembrane passes span 56 to 74 (FAVF…LIYL), 104 to 127 (IGIV…WNFY), 194 to 217 (YHVW…LFIW), 269 to 293 (THHL…YWVL), and 316 to 336 (ILSA…KDPM). The region spanning 159 to 281 (FGLLAEACLS…LYIVFLVAFL (123 aa)) is the Ferric oxidoreductase domain. Heme is bound by residues His-195, His-209, His-270, and His-283. Residues 300–418 (GLDKILRIVQ…EGPYGPASVD (119 aa)) form the FAD-binding FR-type domain. 358 to 361 (HPFS) is a binding site for FAD. 410–413 (GPYG) lines the NAD(+) pocket. 2 consecutive transmembrane segments (helical) span residues 537 to 559 (FRWL…IGLS) and 595 to 616 (DLII…ATIL).

The protein belongs to the ferric reductase (FRE) family. FAD serves as cofactor. Expressed in shoots. Detected in roots, pedicels, flowers, siliques and leaf veins.

It localises to the mitochondrion membrane. It catalyses the reaction 2 a Fe(II)-siderophore + NAD(+) + H(+) = 2 a Fe(III)-siderophore + NADH. Its function is as follows. Ferric chelate reductase probably involved in iron reduction in leaf veins for transport. May participate in the transport of electrons to a Fe(3+) ion via FAD and heme intermediates. This Arabidopsis thaliana (Mouse-ear cress) protein is Ferric reduction oxidase 8, mitochondrial (FRO8).